The chain runs to 180 residues: uncharacterized protein (180 aa).

A signal peptide spans 1 to 22 (MKLRFISSALAAALFAATGSYA). Cys-41 and Cys-81 are oxidised to a cystine.

This sequence belongs to the fimbrial protein family.

The protein localises to the fimbrium. This is an uncharacterized protein from Escherichia coli O157:H7.